A 224-amino-acid chain; its full sequence is UPF0758 protein Sde_3678 (224 aa).

One can recognise an MPN domain in the interval 102-224; it reads SLTSTTAVKQ…AVSFAERGWI (123 aa). Positions 173, 175, and 186 each coordinate Zn(2+). The JAMM motif signature appears at 173–186; sequence HNHPSGIAEPSEPD.

The protein belongs to the UPF0758 family.

This Saccharophagus degradans (strain 2-40 / ATCC 43961 / DSM 17024) protein is UPF0758 protein Sde_3678.